We begin with the raw amino-acid sequence, 554 residues long: Valerianol synthase TPS1A (554 aa).

2 residues coordinate Mg(2+): Asp-307 and Asp-311. Positions 326-330 (VQRWD) match the DDXXD motif motif. The Mg(2+) site is built by Asp-452, Ser-456, and Glu-460.

The protein belongs to the terpene synthase family. Mg(2+) is required as a cofactor. In terms of tissue distribution, expressed in flowers.

It catalyses the reaction (2E,6E)-farnesyl diphosphate + H2O = valerianol + diphosphate. It participates in secondary metabolite biosynthesis; terpenoid biosynthesis. Functionally, terpene synthase that catalyzes the biosynthesis of the terpene valerianol, which is a volatile compound of floral scent. The chain is Valerianol synthase TPS1A from Camellia hiemalis (Camellia).